The primary structure comprises 204 residues: Large ribosomal subunit protein mL67 (204 aa).

The protein belongs to the mitochondrion-specific ribosomal protein mL67 family.

It is found in the nucleus. It localises to the mitochondrion. Functionally, transcription factor involved in regulation of RNA polymerase II-dependent transcription. Also involved in regulation of mitochondrial DNA recombination, maintenance and repair, and generation of homoplasmic cells. This chain is Large ribosomal subunit protein mL67 (MHR1), found in Yarrowia lipolytica (strain CLIB 122 / E 150) (Yeast).